The chain runs to 150 residues: 3-hydroxyacyl-[acyl-carrier-protein] dehydratase FabZ (150 aa).

His51 is an active-site residue.

This sequence belongs to the thioester dehydratase family. FabZ subfamily.

The protein localises to the cytoplasm. It catalyses the reaction a (3R)-hydroxyacyl-[ACP] = a (2E)-enoyl-[ACP] + H2O. Its function is as follows. Involved in unsaturated fatty acids biosynthesis. Catalyzes the dehydration of short chain beta-hydroxyacyl-ACPs and long chain saturated and unsaturated beta-hydroxyacyl-ACPs. The protein is 3-hydroxyacyl-[acyl-carrier-protein] dehydratase FabZ of Legionella pneumophila (strain Paris).